Reading from the N-terminus, the 436-residue chain is MEMLRRNFFRLLMVLVAGCGLIASPANALVEININKGNVEPLPIAITDFLQGELAQKISGVIAADLKRSGLFAPIDKGAFIEKISNPDATPRFEDWKVINAQALVIGRVTQEGDGRLKAEFRLWDTFAGQQMLGQQFYTQPENWRRVAHIIADAIYERITGEKGYFDTRIVYVAESGPKNARKRQLAIMDQDGANSRALTNSNDIVLTPRFSPNRQEITYMSFENQQPRVYLLQLETGQREVVGNFPGMTFAPRFSPDGQRVIMSLQQEGNANIYTMDLRSRTTTRLTNTAAIDTSPSYSPDGSRIVFESDRGGKQQLYVMGADGSGQTRISFGDGSYSTPVWSPRGDLIAFTKQSGGKFSIGVMKPDGSGERILTTGFHNEGPTWAPNGRVLMFFRQNAGAGGPQLYSIDLTGYNEQLVQTQGFASDPAWSPLME.

The first 28 residues, 1–28 (MEMLRRNFFRLLMVLVAGCGLIASPANA), serve as a signal peptide directing secretion.

This sequence belongs to the TolB family. As to quaternary structure, the Tol-Pal system is composed of five core proteins: the inner membrane proteins TolA, TolQ and TolR, the periplasmic protein TolB and the outer membrane protein Pal. They form a network linking the inner and outer membranes and the peptidoglycan layer.

Its subcellular location is the periplasm. In terms of biological role, part of the Tol-Pal system, which plays a role in outer membrane invagination during cell division and is important for maintaining outer membrane integrity. The sequence is that of Tol-Pal system protein TolB from Rhizobium meliloti (strain 1021) (Ensifer meliloti).